Here is a 238-residue protein sequence, read N- to C-terminus: Epoxyqueuosine reductase QueH (238 aa).

Residues C43, C44, C129, and C132 each contribute to the [4Fe-4S] cluster site. A disulfide bridge connects residues C211 and C213.

It belongs to the QueH family.

It catalyses the reaction epoxyqueuosine(34) in tRNA + AH2 = queuosine(34) in tRNA + A + H2O. It participates in tRNA modification; tRNA-queuosine biosynthesis. Functionally, catalyzes the conversion of epoxyqueuosine (oQ) to queuosine (Q), which is a hypermodified base found in the wobble positions of tRNA(Asp), tRNA(Asn), tRNA(His) and tRNA(Tyr). The sequence is that of Epoxyqueuosine reductase QueH from Staphylococcus epidermidis (strain ATCC 12228 / FDA PCI 1200).